We begin with the raw amino-acid sequence, 1004 residues long: NADH:acrylate oxidoreductase (1004 aa).

T455 bears the FMN phosphoryl threonine mark. The FAD site is built by A508, E527, N535, T536, G540, G541, and D775. The active-site Proton donor is R834. Residues H941, E970, A985, and L986 each coordinate FAD.

The protein belongs to the FAD-dependent oxidoreductase 2 family. FRD/SDH subfamily. FAD serves as cofactor. The cofactor is FMN. In terms of processing, is flavinylated on Thr-455 by ApbE, encoded in a neighboring gene. Flavinylation is essential for catalytic activity.

The enzyme catalyses acrylate + NADH + H(+) = propanoate + NAD(+). Catalyzes the NADH-dependent reduction of acrylate to propanoate. The principal role of ARD in Vibrio seems to be the energy-saving detoxification of acrylate coming from the environment. May also use acrylate as the terminal electron acceptor for NADH regeneration at oxygen deficiency. NADPH cannot replace NADH as the electron donor. Is also able to reduce methacrylate in vitro, but with a much lower efficiency. This chain is NADH:acrylate oxidoreductase, found in Vibrio harveyi (Beneckea harveyi).